The following is a 125-amino-acid chain: Class III hydrophobin G (125 aa).

The N-terminal stretch at Met1–Ala20 is a signal peptide. 4 cysteine pairs are disulfide-bonded: Cys54-Cys107, Cys60-Cys101, Cys61-Cys94, and Cys108-Cys122.

It belongs to the fungal hydrophobin family. Self-assembles to form functional amyloid fibrils called rodlets. Self-assembly into fibrillar rodlets occurs spontaneously at hydrophobic:hydrophilic interfaces and the rodlets further associate laterally to form amphipathic monolayers.

It localises to the secreted. Its subcellular location is the cell wall. In terms of biological role, aerial growth, conidiation, and dispersal of filamentous fungi in the environment rely upon a capability of their secreting small amphipathic proteins called hydrophobins (HPBs) with low sequence identity. Class I can self-assemble into an outermost layer of rodlet bundles on aerial cell surfaces, conferring cellular hydrophobicity that supports fungal growth, development and dispersal; whereas Class II form highly ordered films at water-air interfaces through intermolecular interactions but contribute nothing to the rodlet structure. RodF and rodG belong to Class III, which contains hydrophobins with intermediate (between classes I and II) or atypical characteristics. RodG, unlike rodA, is not required for rodlet formation. This is Class III hydrophobin G from Aspergillus fumigatus (strain ATCC MYA-4609 / CBS 101355 / FGSC A1100 / Af293) (Neosartorya fumigata).